Consider the following 409-residue polypeptide: N-acetylglucosamine-6-phosphate deacetylase (409 aa).

Glu-143 is a binding site for a divalent metal cation. Position 154–155 (154–155) interacts with substrate; the sequence is AH. Residues His-211 and His-232 each coordinate a divalent metal cation. Substrate is bound by residues 235 to 236, Arg-243, and 269 to 272; these read NA and DGIH. Asp-294 serves as the catalytic Proton donor/acceptor. 328-330 is a substrate binding site; sequence LSG.

This sequence belongs to the metallo-dependent hydrolases superfamily. NagA family. It depends on a divalent metal cation as a cofactor.

It catalyses the reaction N-acetyl-D-glucosamine 6-phosphate + H2O = D-glucosamine 6-phosphate + acetate. Its pathway is amino-sugar metabolism; N-acetylneuraminate degradation. Functionally, hydrolyzes the N-glycolyl group from N-glycolylglucosamine 6-phosphate (GlcNGc-6-P) in the N-glycolylneuraminic acid (Neu5Gc) degradation pathway. The chain is N-acetylglucosamine-6-phosphate deacetylase (Amdhd2) from Rattus norvegicus (Rat).